The chain runs to 487 residues: V-type proton ATPase subunit B2 (487 aa).

The residue at position 2 (glycine 2) is an N-acetylglycine.

Belongs to the ATPase alpha/beta chains family. As to quaternary structure, V-ATPase is a heteromultimeric enzyme composed of a peripheral catalytic V1 complex (components A to H) attached to an integral membrane V0 proton pore complex (components: a, c, c'', d and e).

The protein localises to the vacuole membrane. Functionally, non-catalytic subunit of the peripheral V1 complex of vacuolar ATPase. V-ATPase is responsible for acidifying a variety of intracellular compartments in eukaryotic cells. This chain is V-type proton ATPase subunit B2 (VHA-B2), found in Arabidopsis thaliana (Mouse-ear cress).